The following is a 299-amino-acid chain: 4-diphosphocytidyl-2-C-methyl-D-erythritol kinase (299 aa).

Lys-17 is a catalytic residue. ATP is bound at residue Pro-99–Ser-109. Asp-142 is an active-site residue.

It belongs to the GHMP kinase family. IspE subfamily.

The catalysed reaction is 4-CDP-2-C-methyl-D-erythritol + ATP = 4-CDP-2-C-methyl-D-erythritol 2-phosphate + ADP + H(+). Its pathway is isoprenoid biosynthesis; isopentenyl diphosphate biosynthesis via DXP pathway; isopentenyl diphosphate from 1-deoxy-D-xylulose 5-phosphate: step 3/6. Its function is as follows. Catalyzes the phosphorylation of the position 2 hydroxy group of 4-diphosphocytidyl-2C-methyl-D-erythritol. This Deinococcus radiodurans (strain ATCC 13939 / DSM 20539 / JCM 16871 / CCUG 27074 / LMG 4051 / NBRC 15346 / NCIMB 9279 / VKM B-1422 / R1) protein is 4-diphosphocytidyl-2-C-methyl-D-erythritol kinase.